Consider the following 101-residue polypeptide: Large ribosomal subunit protein uL23 (101 aa).

It belongs to the universal ribosomal protein uL23 family. As to quaternary structure, part of the 50S ribosomal subunit. Contacts protein L29, and trigger factor when it is bound to the ribosome.

Its function is as follows. One of the early assembly proteins it binds 23S rRNA. One of the proteins that surrounds the polypeptide exit tunnel on the outside of the ribosome. Forms the main docking site for trigger factor binding to the ribosome. In Leptospira biflexa serovar Patoc (strain Patoc 1 / Ames), this protein is Large ribosomal subunit protein uL23.